The chain runs to 144 residues: Testis-specific protein TSX (144 aa).

Disordered stretches follow at residues 1-21 (MSEKQSPKTSEAECSAMDLPE), 69-99 (EDRVSSTDDEDTCQAGCTEDDETSHSDRDID), and 120-144 (FTDQNPQADQDLEETESDGAMNPTD). The segment covering 75–90 (TDDEDTCQAGCTEDDE) has biased composition (acidic residues).

Testis.

May have an RNA/DNA binding role. This is Testis-specific protein TSX (Tsx) from Mus musculus (Mouse).